Reading from the N-terminus, the 300-residue chain is Cation-efflux pump FieF (300 aa).

The helical transmembrane segment at 24–44 threads the bilayer; sequence LLIKIFAWWYTGSVSILAALV. The Zn(2+) site is built by Asp-45 and Asp-49. Transmembrane regions (helical) follow at residues 82–102 and 114–134; these read AALA…LTSI and PGVG…LVTF. The Zn(2+) site is built by His-153 and Asp-157. Helical transmembrane passes span 156-176 and 178-198; these read SDVM…YGWH and ADAL…LRMG.

This sequence belongs to the cation diffusion facilitator (CDF) transporter (TC 2.A.4) family. FieF subfamily. In terms of assembly, homodimer.

The protein resides in the cell inner membrane. It catalyses the reaction Zn(2+)(in) + H(+)(out) = Zn(2+)(out) + H(+)(in). The catalysed reaction is Cd(2+)(in) + H(+)(out) = Cd(2+)(out) + H(+)(in). It carries out the reaction Fe(2+)(in) + H(+)(out) = Fe(2+)(out) + H(+)(in). In terms of biological role, divalent metal cation transporter which exports Zn(2+), Cd(2+) and possibly Fe(2+). May be involved in zinc and iron detoxification by efflux. The sequence is that of Cation-efflux pump FieF from Salmonella enteritidis PT4 (strain P125109).